A 436-amino-acid chain; its full sequence is KICSTOR complex protein kaptin (436 aa).

Methionine 1 carries the post-translational modification N-acetylmethionine.

As to quaternary structure, part of the KICSTOR complex composed of KPTN, ITFG2, KICS2 and SZT2. SZT2 probably serves as a link between the other three proteins in the KICSTOR complex and mediates the direct interaction with the GATOR1 complex. May associate with F-actin filaments.

It localises to the lysosome membrane. It is found in the cell projection. The protein localises to the lamellipodium. The protein resides in the stereocilium. As part of the KICSTOR complex functions in the amino acid-sensing branch of the TORC1 signaling pathway. Recruits, in an amino acid-independent manner, the GATOR1 complex to the lysosomal membranes and allows its interaction with GATOR2 and the RAG GTPases. Functions upstream of the RAG GTPases and is required to negatively regulate mTORC1 signaling in absence of amino acids. In absence of the KICSTOR complex mTORC1 is constitutively localized to the lysosome and activated. The KICSTOR complex is also probably involved in the regulation of mTORC1 by glucose. This is KICSTOR complex protein kaptin from Homo sapiens (Human).